The chain runs to 243 residues: Cell surface glycoprotein CD200 receptor 1-B (243 aa).

Over 1 to 29 (MEISQQAGWCKKPASPMNTRAALEAVRNT) the chain is Cytoplasmic. A helical; Signal-anchor for type II membrane protein membrane pass occupies residues 30–47 (AWTIVLLTSAAVMGASGI). Residues 47 to 146 (ISRVSANLGH…GNFHYLYHLT (100 aa)) form the Ig-like V-type domain. The Lumenal segment spans residues 48–243 (SRVSANLGHS…LAQLPGGSAP (196 aa)). Cystine bridges form between C62–C130 and C165–C214. 6 N-linked (GlcNAc...) asparagine glycosylation sites follow: N64, N67, N127, N193, N222, and N228. Residues 144 to 228 (HLTVLVAPRM…ATLNETRSIN (85 aa)) form the Ig-like C2-type domain.

This sequence belongs to the CD200R family. As to expression, expressed in peripheral blood lymphocytes (PBL) and peripheral blood mononuclear cells (PBMC).

The protein resides in the membrane. The sequence is that of Cell surface glycoprotein CD200 receptor 1-B (CD200R1B) from Gallus gallus (Chicken).